The following is a 405-amino-acid chain: Serine-type anaerobic sulfatase-maturating enzyme (405 aa).

Positions 18 to 249 constitute a Radical SAM core domain; sequence PRSPVPFHIL…QWRKRCDRGR (232 aa). [4Fe-4S] cluster-binding residues include cysteine 35 and cysteine 39. Tyrosine 41 serves as a coordination point for S-adenosyl-L-methionine. Cysteine 42 contacts [4Fe-4S] cluster. Residues glycine 84, serine 140, and arginine 152 each contribute to the S-adenosyl-L-methionine site. Residues cysteine 270, cysteine 276, and cysteine 291 each contribute to the [4Fe-4S] cluster site. Aspartate 292 acts as the Proton acceptor in catalysis. 5 residues coordinate [4Fe-4S] cluster: cysteine 331, cysteine 334, cysteine 340, cysteine 344, and cysteine 357.

The protein belongs to the radical SAM superfamily. Anaerobic sulfatase-maturating enzyme family. In terms of assembly, monomer. Interacts with AtsA prior to its export to the periplasm. Requires [4Fe-4S] cluster as cofactor.

The protein resides in the cytoplasm. It catalyses the reaction L-seryl-[sulfatase] + S-adenosyl-L-methionine = 3-oxo-L-alanyl-[sulfatase] + 5'-deoxyadenosine + L-methionine + H(+). It participates in protein modification; sulfatase oxidation. In terms of biological role, involved in 'Ser-type' sulfatase maturation under anaerobic conditions. Catalyzes the post-translational modification of serine ('Ser-72' in the arylsulfatase AtsA) into 3-oxoalanine (also known as C(alpha)-formylglycine (FGly)), by a free radical chemical mechanism initiated via the reductive cleavage of S-adenosyl-L-methionine (SAM). This Klebsiella aerogenes (Enterobacter aerogenes) protein is Serine-type anaerobic sulfatase-maturating enzyme.